The primary structure comprises 764 residues: MTQEVDTVERAAATPDHPQPYRELGLKDDEYERIREILGRRPTDAELAMYSVMWSEHCSYKSSKVHLRYFGETTTEKMRETMLAGIGENAGVVDIGDGWAATFKVESHNHPSYIEPYQGAATGVGGIVRDIMAMGARPVAVMDQLRFGAADAPDTRRVLDGVVRGIGGYGNSLGLPNIGGETVFDASYAGNPLVNALCVGVLRKEDLKLAFASGAGNKIILFGARTGLDGIGGVSVLASETFGGDESGAGRKKLPSVQVGDPFTEKVLIECCLELYAADLVVGIQDLGGAGLSCATSELASAGDGGMRVELERVPLRAANMTPAEILSSESQERMCAVVTPDNVDAFMAVCRKWDVLATDIGEVTDSGRLEITWHGETVVDVPPRTVAHEGPVYERPVQRPDSQDALVANTTASLERPSTGDELRATLLQLLGSPALCSRAFITEQYDRYVRGNTVLAEHADGGVLRVDEQTGRGIAISTDASGRYTALDPYAGAQLALAEAYRNVAVTGATPVAVTNCLNFGSPEDPGVMWQFSQAVRGLADGAAALGIPVTGGNVSFYNQTGTTAILPTPVVGVLGVIDDVKRRIPTGFGTEPGETLILLGDTRDEFDGSIWAQVTADHLGGVPPTVDLDRERLLAEVLTAASRDGLVSAAHDLSEGGLIQAVVEASLAGETGCRIVLPEGWNPFVTLFSESAGRVLVAVPRTEESRFTAMCEARGLPANRIGVVDQGPDGGEPAVEVQGLFTVTLEELRRTSEGVLPGLFG.

The disordered stretch occupies residues 1 to 23; that stretch reads MTQEVDTVERAAATPDHPQPYRE. H57 is a catalytic residue. Residues Y60 and K104 each contribute to the ATP site. Residue E106 coordinates Mg(2+). Residues 107–110 and R129 each bind substrate; that span reads SHNH. The active-site Proton acceptor is the H108. Position 130 (D130) interacts with Mg(2+). A substrate-binding site is contributed by Q258. D286 provides a ligand contact to Mg(2+). 330-332 serves as a coordination point for substrate; the sequence is ESQ. Residues N518 and G555 each contribute to the ATP site. N556 contributes to the Mg(2+) binding site. Substrate is bound at residue S558.

Belongs to the FGAMS family. As to quaternary structure, monomer. Part of the FGAM synthase complex composed of 1 PurL, 1 PurQ and 2 PurS subunits.

Its subcellular location is the cytoplasm. It catalyses the reaction N(2)-formyl-N(1)-(5-phospho-beta-D-ribosyl)glycinamide + L-glutamine + ATP + H2O = 2-formamido-N(1)-(5-O-phospho-beta-D-ribosyl)acetamidine + L-glutamate + ADP + phosphate + H(+). It functions in the pathway purine metabolism; IMP biosynthesis via de novo pathway; 5-amino-1-(5-phospho-D-ribosyl)imidazole from N(2)-formyl-N(1)-(5-phospho-D-ribosyl)glycinamide: step 1/2. Part of the phosphoribosylformylglycinamidine synthase complex involved in the purines biosynthetic pathway. Catalyzes the ATP-dependent conversion of formylglycinamide ribonucleotide (FGAR) and glutamine to yield formylglycinamidine ribonucleotide (FGAM) and glutamate. The FGAM synthase complex is composed of three subunits. PurQ produces an ammonia molecule by converting glutamine to glutamate. PurL transfers the ammonia molecule to FGAR to form FGAM in an ATP-dependent manner. PurS interacts with PurQ and PurL and is thought to assist in the transfer of the ammonia molecule from PurQ to PurL. This chain is Phosphoribosylformylglycinamidine synthase subunit PurL, found in Mycolicibacterium vanbaalenii (strain DSM 7251 / JCM 13017 / BCRC 16820 / KCTC 9966 / NRRL B-24157 / PYR-1) (Mycobacterium vanbaalenii).